The sequence spans 241 residues: Guanosine phosphorylase (241 aa).

This sequence belongs to the PNP/UDP phosphorylase family.

It catalyses the reaction guanosine + phosphate = alpha-D-ribose 1-phosphate + guanine. The enzyme catalyses a purine D-ribonucleoside + phosphate = a purine nucleobase + alpha-D-ribose 1-phosphate. It carries out the reaction inosine + phosphate = alpha-D-ribose 1-phosphate + hypoxanthine. The catalysed reaction is adenosine + phosphate = alpha-D-ribose 1-phosphate + adenine. Activity is higher at low KCl concentrations. Its function is as follows. Phosphorylase involved in the non-carboxylating pentose bisphosphate pathway, a nucleoside degradation pathway present in some halophilic archaea. Catalyzes the phosphorolytic cleavage of guanosine to guanine and ribose-1-phosphate (R1P). Exhibits the highest activity toward guanosine, but also shows lower activity against inosine and adenosine. This chain is Guanosine phosphorylase, found in Halorubrum lacusprofundi (strain ATCC 49239 / DSM 5036 / JCM 8891 / ACAM 34).